The sequence spans 309 residues: 4-hydroxy-3-methylbut-2-enyl diphosphate reductase (309 aa).

Cysteine 12 serves as a coordination point for [4Fe-4S] cluster. Residues histidine 41 and histidine 74 each coordinate (2E)-4-hydroxy-3-methylbut-2-enyl diphosphate. 2 residues coordinate dimethylallyl diphosphate: histidine 41 and histidine 74. Residues histidine 41 and histidine 74 each coordinate isopentenyl diphosphate. Cysteine 96 lines the [4Fe-4S] cluster pocket. Histidine 124 contributes to the (2E)-4-hydroxy-3-methylbut-2-enyl diphosphate binding site. Histidine 124 provides a ligand contact to dimethylallyl diphosphate. Histidine 124 provides a ligand contact to isopentenyl diphosphate. The Proton donor role is filled by glutamate 126. A (2E)-4-hydroxy-3-methylbut-2-enyl diphosphate-binding site is contributed by threonine 167. Cysteine 197 is a binding site for [4Fe-4S] cluster. 4 residues coordinate (2E)-4-hydroxy-3-methylbut-2-enyl diphosphate: serine 225, serine 226, asparagine 227, and serine 269. Residues serine 225, serine 226, asparagine 227, and serine 269 each coordinate dimethylallyl diphosphate. Isopentenyl diphosphate contacts are provided by serine 225, serine 226, asparagine 227, and serine 269.

Belongs to the IspH family. It depends on [4Fe-4S] cluster as a cofactor.

It carries out the reaction isopentenyl diphosphate + 2 oxidized [2Fe-2S]-[ferredoxin] + H2O = (2E)-4-hydroxy-3-methylbut-2-enyl diphosphate + 2 reduced [2Fe-2S]-[ferredoxin] + 2 H(+). It catalyses the reaction dimethylallyl diphosphate + 2 oxidized [2Fe-2S]-[ferredoxin] + H2O = (2E)-4-hydroxy-3-methylbut-2-enyl diphosphate + 2 reduced [2Fe-2S]-[ferredoxin] + 2 H(+). It functions in the pathway isoprenoid biosynthesis; dimethylallyl diphosphate biosynthesis; dimethylallyl diphosphate from (2E)-4-hydroxy-3-methylbutenyl diphosphate: step 1/1. The protein operates within isoprenoid biosynthesis; isopentenyl diphosphate biosynthesis via DXP pathway; isopentenyl diphosphate from 1-deoxy-D-xylulose 5-phosphate: step 6/6. Functionally, catalyzes the conversion of 1-hydroxy-2-methyl-2-(E)-butenyl 4-diphosphate (HMBPP) into a mixture of isopentenyl diphosphate (IPP) and dimethylallyl diphosphate (DMAPP). Acts in the terminal step of the DOXP/MEP pathway for isoprenoid precursor biosynthesis. This is 4-hydroxy-3-methylbut-2-enyl diphosphate reductase from Shewanella pealeana (strain ATCC 700345 / ANG-SQ1).